A 1128-amino-acid chain; its full sequence is Scavenger receptor cysteine-rich domain superfamily protein (1128 aa).

Positions 1–24 (MTSLRRGNICWVAVCAALLTLTRG) are cleaved as a signal peptide. Residues 25–1051 (IDVIAKPSRT…VGAQAGPAGG (1027 aa)) are Extracellular-facing. SRCR domains lie at 40-140 (VQLV…VVCN), 143-245 (VRLA…VICT), 248-348 (IRLV…VICT), 351-450 (VRLV…AKCQ), 453-553 (VQLV…VVCR), 555-654 (IRLA…VVCR), 657-757 (LRLA…VVCT), 759-866 (LRLT…VLCK), and 868-968 (IRLV…VQCK). 21 disulfide bridges follow: cysteine 65/cysteine 129, cysteine 78/cysteine 139, cysteine 109/cysteine 119, cysteine 168/cysteine 234, cysteine 181/cysteine 244, cysteine 212/cysteine 222, cysteine 273/cysteine 337, cysteine 286/cysteine 347, cysteine 316/cysteine 326, cysteine 376/cysteine 439, cysteine 389/cysteine 449, cysteine 419/cysteine 429, cysteine 478/cysteine 542, cysteine 491/cysteine 552, cysteine 522/cysteine 532, cysteine 583/cysteine 644, cysteine 596/cysteine 653, cysteine 624/cysteine 634, cysteine 682/cysteine 746, cysteine 695/cysteine 756, and cysteine 726/cysteine 736. Residue asparagine 87 is glycosylated (N-linked (GlcNAc...) asparagine). Residues asparagine 190 and asparagine 194 are each glycosylated (N-linked (GlcNAc...) asparagine). Residue asparagine 229 is glycosylated (N-linked (GlcNAc...) asparagine). An N-linked (GlcNAc...) asparagine glycan is attached at asparagine 422. Residues asparagine 601 and asparagine 612 are each glycosylated (N-linked (GlcNAc...) asparagine). Asparagine 765, asparagine 808, asparagine 834, and asparagine 936 each carry an N-linked (GlcNAc...) asparagine glycan. Cystine bridges form between cysteine 803–cysteine 865, cysteine 833–cysteine 843, cysteine 906–cysteine 967, cysteine 937–cysteine 947, cysteine 971–cysteine 1013, and cysteine 999–cysteine 1026. Positions 969 to 1028 (AGCDWPGPIRHGSFSPNRSSYDPLTTIDVKCDAGYELMGSKTLQCVTGCDWSRPTPECQR) constitute a Sushi domain. Residue asparagine 985 is glycosylated (N-linked (GlcNAc...) asparagine). An N-linked (GlcNAc...) asparagine glycan is attached at asparagine 1031. The helical transmembrane segment at 1052-1072 (VMLIIGIILGAVVMMLIACVA) threads the bilayer. Over 1073–1128 (LYLKGRNKNIGRGNPATTSAIWKPKKEFDELKEPVLSFSAMTAGGAGPEDGMGEDI) the chain is Cytoplasmic.

From the mid-gastrula stage, expressed only in mesenchyme cells that are migrating toward the body wall. At the brachiolaria stage, expressed in presumptive coelomocytes of the coelomic pouch. Also expressed in adult coelomocytes (at protein level).

Its subcellular location is the cytoplasmic vesicle membrane. Functionally, involved in aggregate formation and phagocytosis by larval mesenchyme cells and adult coelomocytes. Binds to bacteria and may act as an opsonin in the innate immune system. The sequence is that of Scavenger receptor cysteine-rich domain superfamily protein from Patiria pectinifera (Starfish).